A 224-amino-acid polypeptide reads, in one-letter code: Phosphoglycolate phosphatase (224 aa).

Asp-10 acts as the Nucleophile in catalysis. 3 residues coordinate Mg(2+): Asp-10, Asp-12, and Asp-176.

It belongs to the HAD-like hydrolase superfamily. CbbY/CbbZ/Gph/YieH family. Mg(2+) is required as a cofactor.

The enzyme catalyses 2-phosphoglycolate + H2O = glycolate + phosphate. Its pathway is organic acid metabolism; glycolate biosynthesis; glycolate from 2-phosphoglycolate: step 1/1. Functionally, specifically catalyzes the dephosphorylation of 2-phosphoglycolate. Is involved in the dissimilation of the intracellular 2-phosphoglycolate formed during the DNA repair of 3'-phosphoglycolate ends, a major class of DNA lesions induced by oxidative stress. This Pasteurella multocida (strain Pm70) protein is Phosphoglycolate phosphatase.